We begin with the raw amino-acid sequence, 1186 residues long: Sericin 1 (1186 aa).

An N-terminal signal peptide occupies residues 1-21; that stretch reads MRFVLCCTLIALAALSVKAFG. Composition is skewed to polar residues over residues 39 to 48 and 104 to 115; these read AASSESSYLN and NGGSASAGQSRD. 3 disordered regions span residues 39-119, 131-494, and 518-1157; these read AASS…SSLR, AVAA…EDSS, and GGAT…VNRL. The segment covering 145–155 has biased composition (low complexity); sequence AQQNAQANWNA. Residues 180–198 are compositionally biased toward basic and acidic residues; the sequence is SDKDITAASKDDSRADSSR. A compositionally biased stretch (low complexity) spans 211 to 224; that stretch reads SESAGLSDRSASSS. Over residues 256-275 the composition is skewed to polar residues; it reads YYNSSPDGSYNAGTRDSSIS. Over residues 286 to 299 the composition is skewed to basic and acidic residues; the sequence is ADKDQIRAANDRSS. Residues 300 to 312 show a composition bias toward low complexity; it reads SKQLKQSSAQISS. Residues 321-334 show a composition bias toward basic and acidic residues; the sequence is SKDRQYSNDKRSKS. Composition is skewed to polar residues over residues 356 to 380, 393 to 409, and 416 to 445; these read RQSN…QTSK, AHSS…SSSY, and FSSS…ASRE. Low complexity-rich tracts occupy residues 465-491, 518-537, 553-698, 705-1004, 1015-1075, and 1097-1145; these read ASQS…TLSE, GGAT…VSGA, SSSS…YGYS, RVSS…YSSS, SSSN…ASSE, and SSTT…TSSS. Repeat copies occupy residues 593-630, 631-668, 669-706, 707-744, 745-782, 783-820, 821-858, 859-896, 897-934, 935-972, and 973-1010. The segment covering 1148–1157 has biased composition (basic residues); sequence RSHHSGVNRL.

As to expression, produced exclusively in the middle (MSG) section of silk glands.

It localises to the secreted. Provides the silk fibroin thread with a sticky coating. Acts as a cement by sticking silk threads together. This chain is Sericin 1 (ser1), found in Bombyx mori (Silk moth).